The chain runs to 398 residues: Succinate--CoA ligase [ADP-forming] subunit beta (398 aa).

The ATP-grasp domain maps to 9-254 (KRLLHEYGAP…LSEEDPKEIE (246 aa)). Residues Lys-46, 53-55 (GRG), Glu-109, Ala-112, and Glu-117 contribute to the ATP site. Positions 209 and 223 each coordinate Mg(2+). Substrate is bound by residues Asn-274 and 331-333 (GIM).

This sequence belongs to the succinate/malate CoA ligase beta subunit family. In terms of assembly, heterotetramer of two alpha and two beta subunits. Requires Mg(2+) as cofactor.

The enzyme catalyses succinate + ATP + CoA = succinyl-CoA + ADP + phosphate. It catalyses the reaction GTP + succinate + CoA = succinyl-CoA + GDP + phosphate. Its pathway is carbohydrate metabolism; tricarboxylic acid cycle; succinate from succinyl-CoA (ligase route): step 1/1. In terms of biological role, succinyl-CoA synthetase functions in the citric acid cycle (TCA), coupling the hydrolysis of succinyl-CoA to the synthesis of either ATP or GTP and thus represents the only step of substrate-level phosphorylation in the TCA. The beta subunit provides nucleotide specificity of the enzyme and binds the substrate succinate, while the binding sites for coenzyme A and phosphate are found in the alpha subunit. This Bartonella tribocorum (strain CIP 105476 / IBS 506) protein is Succinate--CoA ligase [ADP-forming] subunit beta.